The sequence spans 508 residues: Protein DETOXIFICATION 52 (508 aa).

12 consecutive transmembrane segments (helical) span residues 48 to 68, 78 to 98, 122 to 142, 156 to 176, 189 to 209, 222 to 242, 270 to 290, 300 to 320, 341 to 361, 368 to 388, 415 to 437, and 441 to 463; these read ILAA…LGHI, LAIA…ALGM, VLFL…LGKI, AQTY…LHPL, LTLA…FLVS, AAAS…IAGL, IGVC…GLLI, GILI…GLAV, IVAV…AWGV, IFTN…ILGL, INLG…WAAY, and GLWV…VVAT.

This sequence belongs to the multi antimicrobial extrusion (MATE) (TC 2.A.66.1) family. In terms of tissue distribution, detected in the part of the veins in cotyledons of 6-day-old seedlings and the basal parts of the petioles in older plants. Highly expressed in the vascular tissues of hypocotyl in dark-grown seedlings.

It is found in the late endosome membrane. May act as a negative regulator of hypocotyl cell elongation in the light. In Arabidopsis thaliana (Mouse-ear cress), this protein is Protein DETOXIFICATION 52.